The chain runs to 121 residues: Snaclec coagulation factor IX-binding protein subunit A (121 aa).

One can recognise a C-type lectin domain in the interval Y1–E120. 2 disulfides stabilise this stretch: C22/C119 and C94/C111. The Ca(2+) site is built by S33, E35, and E39. Residue E120 coordinates Ca(2+).

The protein belongs to the snaclec family. Heterodimer of subunits A and B; disulfide-linked. As to expression, expressed by the venom gland.

Its subcellular location is the secreted. Anticoagulant protein which binds to the gamma-carboxyglutamic acid-domain regions of factor IX (F9) (but not factor X) in the presence of calcium with a 1 to 1 stoichiometry. The chain is Snaclec coagulation factor IX-binding protein subunit A from Gloydius halys (Chinese water mocassin).